The primary structure comprises 253 residues: Phosphoribosylaminoimidazole-succinocarboxamide synthase (253 aa).

It belongs to the SAICAR synthetase family.

It catalyses the reaction 5-amino-1-(5-phospho-D-ribosyl)imidazole-4-carboxylate + L-aspartate + ATP = (2S)-2-[5-amino-1-(5-phospho-beta-D-ribosyl)imidazole-4-carboxamido]succinate + ADP + phosphate + 2 H(+). The protein operates within purine metabolism; IMP biosynthesis via de novo pathway; 5-amino-1-(5-phospho-D-ribosyl)imidazole-4-carboxamide from 5-amino-1-(5-phospho-D-ribosyl)imidazole-4-carboxylate: step 1/2. The sequence is that of Phosphoribosylaminoimidazole-succinocarboxamide synthase from Roseobacter denitrificans (strain ATCC 33942 / OCh 114) (Erythrobacter sp. (strain OCh 114)).